Reading from the N-terminus, the 140-residue chain is Large ribosomal subunit protein uL14 (140 aa).

It belongs to the universal ribosomal protein uL14 family. As to quaternary structure, component of the large ribosomal subunit.

It is found in the cytoplasm. Its function is as follows. Component of the large ribosomal subunit. The ribosome is a large ribonucleoprotein complex responsible for the synthesis of proteins in the cell. The protein is Large ribosomal subunit protein uL14 (rpl23) of Danio rerio (Zebrafish).